A 527-amino-acid chain; its full sequence is Peptide chain release factor 3 (527 aa).

The tr-type G domain occupies 9-278 (NKRRTFAIIS…GLTQWAPKPQ (270 aa)). GTP contacts are provided by residues 18-25 (SHPDAGKT), 86-90 (DTPGH), and 140-143 (NKLD).

The protein belongs to the TRAFAC class translation factor GTPase superfamily. Classic translation factor GTPase family. PrfC subfamily.

The protein localises to the cytoplasm. Increases the formation of ribosomal termination complexes and stimulates activities of RF-1 and RF-2. It binds guanine nucleotides and has strong preference for UGA stop codons. It may interact directly with the ribosome. The stimulation of RF-1 and RF-2 is significantly reduced by GTP and GDP, but not by GMP. In Haemophilus influenzae (strain 86-028NP), this protein is Peptide chain release factor 3.